The primary structure comprises 301 residues: Homoserine O-acetyltransferase (301 aa).

Cysteine 142 acts as the Acyl-thioester intermediate in catalysis. Substrate is bound by residues lysine 163 and serine 192. Histidine 235 (proton acceptor) is an active-site residue. Residue glutamate 237 is part of the active site. Residue arginine 249 participates in substrate binding.

It belongs to the MetA family.

It is found in the cytoplasm. It catalyses the reaction L-homoserine + acetyl-CoA = O-acetyl-L-homoserine + CoA. It participates in amino-acid biosynthesis; L-methionine biosynthesis via de novo pathway; O-acetyl-L-homoserine from L-homoserine: step 1/1. Its function is as follows. Transfers an acetyl group from acetyl-CoA to L-homoserine, forming acetyl-L-homoserine. The protein is Homoserine O-acetyltransferase of Lachnoclostridium phytofermentans (strain ATCC 700394 / DSM 18823 / ISDg) (Clostridium phytofermentans).